Consider the following 269-residue polypeptide: Shikimate dehydrogenase (NADP(+)) (269 aa).

Shikimate contacts are provided by residues 14–16 (SVS) and Thr-61. Residue Lys-65 is the Proton acceptor of the active site. Residues Asn-85 and Asp-98 each contribute to the shikimate site. NADP(+)-binding positions include 120–124 (GAGGA), 143–148 (NRTEEK), and Thr-211. Shikimate is bound at residue Tyr-213. Gly-234 provides a ligand contact to NADP(+).

This sequence belongs to the shikimate dehydrogenase family. As to quaternary structure, homodimer.

It carries out the reaction shikimate + NADP(+) = 3-dehydroshikimate + NADPH + H(+). It participates in metabolic intermediate biosynthesis; chorismate biosynthesis; chorismate from D-erythrose 4-phosphate and phosphoenolpyruvate: step 4/7. Functionally, involved in the biosynthesis of the chorismate, which leads to the biosynthesis of aromatic amino acids. Catalyzes the reversible NADPH linked reduction of 3-dehydroshikimate (DHSA) to yield shikimate (SA). The polypeptide is Shikimate dehydrogenase (NADP(+)) (Archaeoglobus fulgidus (strain ATCC 49558 / DSM 4304 / JCM 9628 / NBRC 100126 / VC-16)).